We begin with the raw amino-acid sequence, 668 residues long: Threonine--tRNA ligase (668 aa).

The TGS domain maps to 1 to 64 (MSQAISLTFP…TDGKIEIITR (64 aa)). Positions 245–553 (DHRKLGREMD…LIENFAGHMP (309 aa)) are catalytic. The Zn(2+) site is built by cysteine 347, histidine 398, and histidine 530.

It belongs to the class-II aminoacyl-tRNA synthetase family. As to quaternary structure, homodimer. It depends on Zn(2+) as a cofactor.

The protein resides in the cytoplasm. It catalyses the reaction tRNA(Thr) + L-threonine + ATP = L-threonyl-tRNA(Thr) + AMP + diphosphate + H(+). Its function is as follows. Catalyzes the attachment of threonine to tRNA(Thr) in a two-step reaction: L-threonine is first activated by ATP to form Thr-AMP and then transferred to the acceptor end of tRNA(Thr). Also edits incorrectly charged L-seryl-tRNA(Thr). This chain is Threonine--tRNA ligase, found in Rhizobium etli (strain CIAT 652).